Here is a 194-residue protein sequence, read N- to C-terminus: Der GTPase-activating protein YihI (194 aa).

Residues 1 to 81 (MSRSKKTRRI…AKVKKDPRVG (81 aa)) form a disordered region. 2 stretches are compositionally biased toward basic and acidic residues: residues 9 to 23 (RISDIMPARKADKKP) and 36 to 47 (TRYELDVQAREE). Polar residues predominate over residues 59–70 (GSRNVITEQKTA).

This sequence belongs to the YihI family. In terms of assembly, interacts with Der.

In terms of biological role, a GTPase-activating protein (GAP) that modifies Der/EngA GTPase function. May play a role in ribosome biogenesis. This Haemophilus ducreyi (strain 35000HP / ATCC 700724) protein is Der GTPase-activating protein YihI.